The chain runs to 298 residues: 4-diphosphocytidyl-2-C-methyl-D-erythritol kinase (298 aa).

The active site involves Lys15. Residue 100-110 coordinates ATP; the sequence is PIAAGIGGGSA. Asp142 is a catalytic residue.

It belongs to the GHMP kinase family. IspE subfamily.

It carries out the reaction 4-CDP-2-C-methyl-D-erythritol + ATP = 4-CDP-2-C-methyl-D-erythritol 2-phosphate + ADP + H(+). It participates in isoprenoid biosynthesis; isopentenyl diphosphate biosynthesis via DXP pathway; isopentenyl diphosphate from 1-deoxy-D-xylulose 5-phosphate: step 3/6. Catalyzes the phosphorylation of the position 2 hydroxy group of 4-diphosphocytidyl-2C-methyl-D-erythritol. The polypeptide is 4-diphosphocytidyl-2-C-methyl-D-erythritol kinase (Rhodopseudomonas palustris (strain BisA53)).